Reading from the N-terminus, the 431-residue chain is MAAPMEVVVCTDAAAQLWSCVVWELHSGANLLTYRGGQAGPRGLALLNGEYLLAAQQGKNYICAWELQRKDQLQQKIMCPGPVTCLTTAPNGLYVLAGIAESIYLWEVCTGNLLVILSRHYQDVSCLKFTGDGSHFVSAGKDCLALAWSLCSVLQADPSRILAPRHVWSQHTLPITDLHCGFGGPMARVATASLDQTVKLWAISSGDLLLSVLFDMGITSVTMDLAEHHIFCGGSDGSIFQVDLCSWPGLREHSFQPEQNTGKVFKGHRNQVTCLSVSTDGSVLLSGSHDESVRLWDVKSKQCLRTVTLKGPVTNAAIILAPPSMLNPEFRPSLPLPHFNKHLLGAEHGDEAQGGGLRLQLGLHLQGKEPSYLERLEQLQAVLSSYLEKNMLGSQMLPARVFDLEDEVRSLRKINRDLFDFSTRIITRPSK.

WD repeat units lie at residues G36–Q75, M78–I116, R119–P158, Q170–S211, L213–P257, and G267–T306.

The protein belongs to the WD repeat IPI3/WDR18 family. As to quaternary structure, component of the 5FMC complex, at least composed of PELP1, LAS1L, TEX10, WDR18 and SENP3; the complex interacts with methylated CHTOP and ZNF148. Interacts with NOL9. Component of the PELP1 complex, composed of at least PELP1, TEX10 and WDR18. The complex interacts with pre-60S ribosome particles.

The protein localises to the nucleus. It is found in the nucleolus. The protein resides in the nucleoplasm. Its subcellular location is the cytoplasm. It localises to the dynein axonemal particle. Functionally, functions as a component of the Five Friends of Methylated CHTOP (5FMC) complex; the 5FMC complex is recruited to ZNF148 by methylated CHTOP, leading to desumoylation of ZNF148 and subsequent transactivation of ZNF148 target genes. Component of the PELP1 complex involved in the nucleolar steps of 28S rRNA maturation and the subsequent nucleoplasmic transit of the pre-60S ribosomal subunit. May play a role during development. The polypeptide is WD repeat-containing protein 18 (Wdr18) (Mus musculus (Mouse)).